A 453-amino-acid chain; its full sequence is uncharacterized protein (453 aa).

Residues Cys74, Cys80, Cys83, and Cys162 each contribute to the [4Fe-4S] cluster site. Positions 286, 315, 336, and 384 each coordinate S-adenosyl-L-methionine. The Nucleophile role is filled by Cys411.

This sequence belongs to the class I-like SAM-binding methyltransferase superfamily. RNA M5U methyltransferase family.

This is an uncharacterized protein from Staphylococcus aureus (strain Mu50 / ATCC 700699).